The following is a 129-amino-acid chain: Phosphoribosyl-AMP cyclohydrolase (129 aa).

Position 94 (aspartate 94) interacts with Mg(2+). A Zn(2+)-binding site is contributed by cysteine 95. The Mg(2+) site is built by aspartate 96 and aspartate 98. The Zn(2+) site is built by cysteine 111 and cysteine 118.

This sequence belongs to the PRA-CH family. As to quaternary structure, homodimer. Mg(2+) serves as cofactor. Requires Zn(2+) as cofactor.

The protein localises to the cytoplasm. It carries out the reaction 1-(5-phospho-beta-D-ribosyl)-5'-AMP + H2O = 1-(5-phospho-beta-D-ribosyl)-5-[(5-phospho-beta-D-ribosylamino)methylideneamino]imidazole-4-carboxamide. Its pathway is amino-acid biosynthesis; L-histidine biosynthesis; L-histidine from 5-phospho-alpha-D-ribose 1-diphosphate: step 3/9. Its function is as follows. Catalyzes the hydrolysis of the adenine ring of phosphoribosyl-AMP. The protein is Phosphoribosyl-AMP cyclohydrolase of Corynebacterium efficiens (strain DSM 44549 / YS-314 / AJ 12310 / JCM 11189 / NBRC 100395).